The following is a 207-amino-acid chain: MIVTIDGVAASGKSSVASGVARALGVPYVSSGLLYRAATLLGQDAGLDLTDQASLLAYLRDHPLRLEPLAEGNRVWQGQRDLTPELHSSAVDQGVSQVAAHPEVRAWVDDQLRALTPPFVAEGRDMGTNVFPHAPAKFYLTASPRVRAERRSRERPEAVEAIEAALIQRDALDTTQSAPAPDARVIDTGPLTLEQVIVAITSQLPSQ.

7 to 15 contacts ATP; the sequence is GVAASGKSS.

It belongs to the cytidylate kinase family. Type 1 subfamily.

The protein localises to the cytoplasm. It carries out the reaction CMP + ATP = CDP + ADP. It catalyses the reaction dCMP + ATP = dCDP + ADP. This Deinococcus deserti (strain DSM 17065 / CIP 109153 / LMG 22923 / VCD115) protein is Cytidylate kinase.